The following is a 349-amino-acid chain: MIEFDNLTYLHGKPQGTGLLKANPEDFVVVEDLGFEPDGEGEHILVRILKNGCNTRFVADALAKFLKIHAREVSFAGQKDKHAVTEQWLCARVPGKEMPDLSAFQLEGCQVLEYARHKRKLRLGALKGNAFTLVLREVSNRDDVEQRLIDICVKGVPNYFGAQRFGIGGSNLQGALRWAQTNTPVRDRNKRSFWLSAARSALFNQIVAERLKKADVNQVVDGDALQLAGRGSWFVATTEELAELQRRVNDKELMITAALPGSGEWGTQREALAFEQAAVAAETELQALLVREKVEAARRAMLLYPQQLSWNWWDDVTVEIRFWLPAGSFATSVVRELINTTGDYAHIAE.

Phe-27 contributes to the substrate binding site. The active-site Nucleophile is the Asp-80. Asn-129 contacts substrate. One can recognise a TRUD domain in the interval 155 to 303 (GVPNYFGAQR…VEAARRAMLL (149 aa)). Phe-329 provides a ligand contact to substrate.

It belongs to the pseudouridine synthase TruD family.

It catalyses the reaction uridine(13) in tRNA = pseudouridine(13) in tRNA. Its function is as follows. Responsible for synthesis of pseudouridine from uracil-13 in transfer RNAs. The sequence is that of tRNA pseudouridine synthase D from Shigella dysenteriae serotype 1 (strain Sd197).